Consider the following 453-residue polypeptide: MPRLFGTDGVRGLANGTLTADLALGLAQAAAAVLTRGRSAEARRAVGKRPLAIVARDPRVSGEFLSAAVAAGLASSGIDVYDAGVIPTPAAAFLIADFDADFGVMVSASHNPAPDNGIKIFARGGTKLPDVVEDRIEEHLHLEKLTPTGAEVGRIQCFADAEDRYVLHLLASLPHRLDGIHVVLDCAHGAAAGISPEVFTDAGARVTVIGDAPDGMNINDGVGSTHLDRLAEAVLAAGADVGIAHDGDADRCLAIDASGRTVDGDQIMAILALGMKERGKLRDDTLVATVMSNLGLKLAMREAGVRVVETAVGDRYVLEEMNGHGYSLGGEQSGHVIMSDFATTGDGILTGLHLLSEMARQRKTLAELAQAMTVYPQVMVNVRGVDHHSVHSDELLRSAVEAVEAALGDSGRVLLRPSGTEPLVRVMVEAADQETAVRMANELADVVRERLAG.

Serine 109 acts as the Phosphoserine intermediate in catalysis. Positions 109, 246, 248, and 250 each coordinate Mg(2+). The residue at position 109 (serine 109) is a Phosphoserine.

It belongs to the phosphohexose mutase family. Mg(2+) serves as cofactor. Post-translationally, activated by phosphorylation.

The enzyme catalyses alpha-D-glucosamine 1-phosphate = D-glucosamine 6-phosphate. Functionally, catalyzes the conversion of glucosamine-6-phosphate to glucosamine-1-phosphate. This is Phosphoglucosamine mutase from Leifsonia xyli subsp. xyli (strain CTCB07).